Here is a 367-residue protein sequence, read N- to C-terminus: Outer membrane porin C (367 aa).

The signal sequence occupies residues 1 to 21 (MKVKVLSLLVPALLVAGAANA). Over 22 to 33 (AEVYNKDGNKLD) the chain is Periplasmic. Residues 34–42 (LYGKVDGLH) traverse the membrane as a beta stranded segment. Topologically, residues 43–53 (YFSDNKDVDGD) are extracellular. A beta stranded membrane pass occupies residues 54–63 (QTYMRLGFKG). At 64–73 (ETQVTDQLTG) the chain is on the periplasmic side. The chain crosses the membrane as a beta stranded span at residues 74-84 (YGQWEYQIQGN). The Extracellular portion of the chain corresponds to 85-91 (SAENENN). Residues 92–101 (SWTRVAFAGL) traverse the membrane as a beta stranded segment. Over 102–106 (KFQDV) the chain is Periplasmic. A beta stranded transmembrane segment spans residues 107-115 (GSFDYGRNY). A loop L3; may constrict the pore region spans residues 116–133 (GVVYDVTSWTDVLPEFGG). Residues 116–141 (GVVYDVTSWTDVLPEFGGDTYGSDNF) are Extracellular-facing. A beta stranded transmembrane segment spans residues 142 to 154 (MQQRGNGFATYRN). The Periplasmic portion of the chain corresponds to 155–163 (TDFFGLVDG). The chain crosses the membrane as a beta stranded span at residues 164 to 171 (LNFAVQYQ). The Extracellular portion of the chain corresponds to 172-200 (GKNGNPSGEGFTSGVTNNGRDALRQNGDG). Residues 201 to 207 (VGGSITY) traverse the membrane as a beta stranded segment. Topologically, residues 208 to 211 (DYEG) are periplasmic. Residues 212–219 (FGIGGAIS) form a beta stranded membrane-spanning segment. Topologically, residues 220–241 (SSKRTDAQNTAAYIGNGDRAET) are extracellular. The beta stranded transmembrane segment at 242-248 (YTGGLKY) threads the bilayer. Residues 249 to 252 (DANN) lie on the Periplasmic side of the membrane. A beta stranded membrane pass occupies residues 253–260 (IYLAAQYT). The Extracellular segment spans residues 261-269 (QTYNATRVG). The beta stranded transmembrane segment at 270 to 286 (SLGWANKAQNFEAVAQY) threads the bilayer. Residues 287-291 (QFDFG) lie on the Periplasmic side of the membrane. A beta stranded membrane pass occupies residues 292-299 (LRPSLAYL). The Extracellular portion of the chain corresponds to 300-318 (QSKGKNLGRGYDDEDILKY). Residues 319–326 (VDVGATYY) traverse the membrane as a beta stranded segment. Over 327–330 (FNKN) the chain is Periplasmic. A beta stranded transmembrane segment spans residues 331-338 (MSTYVDYK). At 339–358 (INLLDDNQFTRDAGINTDNI) the chain is on the extracellular side. Residues N340, L342, and T355 each contribute to the Mg(2+) site. The chain crosses the membrane as a beta stranded span at residues 359–366 (VALGLVYQ). Position 367 (F367) is a topological domain, periplasmic.

Belongs to the Gram-negative porin family. In terms of assembly, homotrimer. Forms mixed heterotrimers with OmpF and with PhoE; other mixed heterotrimers are also probable.

The protein localises to the cell outer membrane. Its function is as follows. Forms pores that allow passive diffusion of small molecules across the outer membrane. (Microbial infection) Supports colicin E5 entry in the absence of its major receptor OmpF. Functionally, (Microbial infection) A mixed OmpC-OmpF heterotrimer is the outer membrane receptor for toxin CdiA-EC536; polymorphisms in extracellular loops 4 and 5 of OmpC confer susceptibility to CdiA-EC536-mediated toxicity. The protein is Outer membrane porin C (ompC) of Escherichia coli (strain K12).